The primary structure comprises 279 residues: Large ribosomal subunit protein uL2 (279 aa).

A disordered region spans residues 202–279 (NASIGKAGRS…TSRHKSKKKG (78 aa)). Positions 209–220 (GRSRWLGRRPHN) are enriched in basic residues.

Belongs to the universal ribosomal protein uL2 family. As to quaternary structure, part of the 50S ribosomal subunit. Forms a bridge to the 30S subunit in the 70S ribosome.

In terms of biological role, one of the primary rRNA binding proteins. Required for association of the 30S and 50S subunits to form the 70S ribosome, for tRNA binding and peptide bond formation. It has been suggested to have peptidyltransferase activity; this is somewhat controversial. Makes several contacts with the 16S rRNA in the 70S ribosome. In Methylocella silvestris (strain DSM 15510 / CIP 108128 / LMG 27833 / NCIMB 13906 / BL2), this protein is Large ribosomal subunit protein uL2.